Reading from the N-terminus, the 319-residue chain is HPr kinase/phosphorylase (319 aa).

Catalysis depends on residues His-141 and Lys-162. An ATP-binding site is contributed by 156–163; sequence GNSGVGKS. Ser-163 is a Mg(2+) binding site. Asp-180 acts as the Proton acceptor; for phosphorylation activity. Proton donor; for dephosphorylation activity in catalysis. The segment at 204–213 is important for the catalytic mechanism of both phosphorylation and dephosphorylation; it reads MEIRGIGIID. Glu-205 contributes to the Mg(2+) binding site. The active site involves Arg-246. Positions 267–272 are important for the catalytic mechanism of dephosphorylation; it reads PVKVGR.

It belongs to the HPrK/P family. In terms of assembly, homohexamer. Requires Mg(2+) as cofactor.

The enzyme catalyses [HPr protein]-L-serine + ATP = [HPr protein]-O-phospho-L-serine + ADP + H(+). The catalysed reaction is [HPr protein]-O-phospho-L-serine + phosphate + H(+) = [HPr protein]-L-serine + diphosphate. Functionally, catalyzes the ATP- as well as the pyrophosphate-dependent phosphorylation of a specific serine residue in HPr, a phosphocarrier protein of the phosphoenolpyruvate-dependent sugar phosphotransferase system (PTS). HprK/P also catalyzes the pyrophosphate-producing, inorganic phosphate-dependent dephosphorylation (phosphorolysis) of seryl-phosphorylated HPr (P-Ser-HPr). The two antagonistic activities of HprK/P are regulated by several intracellular metabolites, which change their concentration in response to the absence or presence of rapidly metabolisable carbon sources (glucose, fructose, etc.) in the growth medium. Therefore, by controlling the phosphorylation state of HPr, HPrK/P is a sensor enzyme that plays a major role in the regulation of carbon metabolism and sugar transport: it mediates carbon catabolite repression (CCR), and regulates PTS-catalyzed carbohydrate uptake and inducer exclusion. The chain is HPr kinase/phosphorylase from Lactobacillus gasseri (strain ATCC 33323 / DSM 20243 / BCRC 14619 / CIP 102991 / JCM 1131 / KCTC 3163 / NCIMB 11718 / NCTC 13722 / AM63).